The following is a 275-amino-acid chain: Protein rolling stone (275 aa).

The next 6 membrane-spanning stretches (helical) occupy residues 45 to 65 (LLYR…CVIV), 72 to 92 (FFIY…LISA), 127 to 147 (WLYN…WVFL), 162 to 182 (IITH…IAFP), 185 to 205 (ILHM…TLIY), and 232 to 252 (MVTF…LFGL).

As to expression, expressed in cells of the somatic mesoderm, most notably the muscle founder cells, between embryonic stages 12 and 14, in growing muscle fibers in dorsal, lateral and ventral positions. At stage 16 strongest expression is in some ventral muscles and muscle 8. At stages 16/17 expression is restricted to some cells of the CNS, the brain and the gonads.

The protein localises to the membrane. Its function is as follows. May have a central role in the fusion process during myogenesis, within the somatic mesoderm. The sequence is that of Protein rolling stone (rost) from Drosophila melanogaster (Fruit fly).